Reading from the N-terminus, the 180-residue chain is 3-hydroxyanthranilate 3,4-dioxygenase (180 aa).

Residue arginine 46 coordinates O2. Fe cation contacts are provided by histidine 50, glutamate 56, and histidine 94. Substrate is bound at residue glutamate 56. Substrate contacts are provided by arginine 98 and glutamate 109. Fe cation is bound by residues cysteine 124, cysteine 127, cysteine 161, and cysteine 164.

Belongs to the 3-HAO family. Homodimer. Requires Fe(2+) as cofactor.

The catalysed reaction is 3-hydroxyanthranilate + O2 = (2Z,4Z)-2-amino-3-carboxymuconate 6-semialdehyde. The protein operates within cofactor biosynthesis; NAD(+) biosynthesis; quinolinate from L-kynurenine: step 3/3. Catalyzes the oxidative ring opening of 3-hydroxyanthranilate to 2-amino-3-carboxymuconate semialdehyde, which spontaneously cyclizes to quinolinate. The sequence is that of 3-hydroxyanthranilate 3,4-dioxygenase from Jannaschia sp. (strain CCS1).